Reading from the N-terminus, the 362-residue chain is Tyrosine recombinase XerH (362 aa).

Residues 43-140 enclose the Core-binding (CB) domain; it reads ECLNELNQAC…ALLGLFSYID (98 aa). Residues 170 to 357 form the Tyr recombinase domain; it reads KLPTHLNNEE…DKQRLEEAAS (188 aa). Catalysis depends on residues Arg-213, Lys-239, His-309, Arg-312, and His-335. Tyr-344 (O-(3'-phospho-DNA)-tyrosine intermediate) is an active-site residue.

It belongs to the 'phage' integrase family. XerH subfamily.

The protein localises to the cytoplasm. FtsK is required for recombination. Site-specific tyrosine recombinase, which acts by catalyzing the cutting and rejoining of the recombining DNA molecules. Involved in chromosome segregation. May contribute to chromosome decatenation. The protein is Tyrosine recombinase XerH of Helicobacter pylori (strain ATCC 700392 / 26695) (Campylobacter pylori).